We begin with the raw amino-acid sequence, 162 residues long: ATP synthase subunit b 1 (162 aa).

Residues 1 to 21 (MLLTAEFWVAVAFVAFLVIVW) traverse the membrane as a helical segment.

This sequence belongs to the ATPase B chain family. In terms of assembly, F-type ATPases have 2 components, F(1) - the catalytic core - and F(0) - the membrane proton channel. F(1) has five subunits: alpha(3), beta(3), gamma(1), delta(1), epsilon(1). F(0) has three main subunits: a(1), b(2) and c(10-14). The alpha and beta chains form an alternating ring which encloses part of the gamma chain. F(1) is attached to F(0) by a central stalk formed by the gamma and epsilon chains, while a peripheral stalk is formed by the delta and b chains.

The protein resides in the cell inner membrane. F(1)F(0) ATP synthase produces ATP from ADP in the presence of a proton or sodium gradient. F-type ATPases consist of two structural domains, F(1) containing the extramembraneous catalytic core and F(0) containing the membrane proton channel, linked together by a central stalk and a peripheral stalk. During catalysis, ATP synthesis in the catalytic domain of F(1) is coupled via a rotary mechanism of the central stalk subunits to proton translocation. Its function is as follows. Component of the F(0) channel, it forms part of the peripheral stalk, linking F(1) to F(0). The chain is ATP synthase subunit b 1 from Methylorubrum populi (strain ATCC BAA-705 / NCIMB 13946 / BJ001) (Methylobacterium populi).